Reading from the N-terminus, the 388-residue chain is Deoxyuridine 5'-triphosphate nucleotidohydrolase (388 aa).

Residues 77-88 are compositionally biased toward basic and acidic residues; that stretch reads EEKYDKEQHPGE. 2 disordered regions span residues 77–96 and 336–388; these read EEKYDKEQHPGEDEASSPLP and THTP…PRHP. Over residues 351-363 the composition is skewed to acidic residues; the sequence is VDDDVDETEEDEK.

This sequence belongs to the dUTPase family. Mg(2+) is required as a cofactor.

It catalyses the reaction dUTP + H2O = dUMP + diphosphate + H(+). It functions in the pathway pyrimidine metabolism; dUMP biosynthesis; dUMP from dCTP (dUTP route): step 2/2. Involved in nucleotide metabolism: produces dUMP, the immediate precursor of thymidine nucleotides and decreases the intracellular concentration of dUTP to avoid uracil incorporation into viral DNA. This Homo sapiens (Human) protein is Deoxyuridine 5'-triphosphate nucleotidohydrolase.